The chain runs to 214 residues: Adenylate kinase (214 aa).

Residue 10 to 15 (GAGKGT) coordinates ATP. The tract at residues 30 to 59 (STGDMLRAAVKAGTPLGLEAKKVMDAGQLV) is NMP. Residues Thr-31, Arg-36, 57 to 59 (QLV), 85 to 88 (GFPR), and Gln-92 each bind AMP. Residues 122–159 (GRRVHPGSGRVYHVVFNPPKVEGKDDVTGEDLAIRPDD) form an LID region. ATP contacts are provided by residues Arg-123 and 132-133 (VY). Positions 156 and 167 each coordinate AMP. Gln-200 is an ATP binding site.

This sequence belongs to the adenylate kinase family. In terms of assembly, monomer.

Its subcellular location is the cytoplasm. The catalysed reaction is AMP + ATP = 2 ADP. The protein operates within purine metabolism; AMP biosynthesis via salvage pathway; AMP from ADP: step 1/1. In terms of biological role, catalyzes the reversible transfer of the terminal phosphate group between ATP and AMP. Plays an important role in cellular energy homeostasis and in adenine nucleotide metabolism. This is Adenylate kinase from Shewanella putrefaciens (strain CN-32 / ATCC BAA-453).